The chain runs to 141 residues: HTH-type transcriptional repressor NsrR (141 aa).

The HTH rrf2-type domain occupies 2-129 (QLTSFTDYAL…DDCTIEELLS (128 aa)). Positions 28–51 (ITEVTDLFGVSRNHMVKVINRLGQ) form a DNA-binding region, H-T-H motif. Cysteine 91, cysteine 96, and cysteine 102 together coordinate [2Fe-2S] cluster.

It depends on [2Fe-2S] cluster as a cofactor.

Its function is as follows. Nitric oxide-sensitive repressor of genes involved in protecting the cell against nitrosative stress. May require iron for activity. The polypeptide is HTH-type transcriptional repressor NsrR (Vibrio campbellii (strain ATCC BAA-1116)).